The primary structure comprises 327 residues: MFNDMPVFDYEDIQLIPNKCIINSRSEADTSVRLGNYTFKLPVIPANMQTIIDETIAEQLARDGYFYIMHRFDEQGRKPFIQRMHEQQLIASISVGVKDYEYDFVSSLKEDAPEFITIDIAHGHADSVIKMIKHIKAELPETFVIAGNVGTPEAVRELENAGADATKVGIGPGKVCITKVKTGFGTGGWQLAAVRWCAKAARKPIIADGGIRTHGDIAKSIRFGATMVMIGSLFAGHIESPGKMVEIDGQSFKEYYGSASEYQKGEHKNVEGKKILLPTKGHLADTLTEMKQDLQSSISYAGGRELESLRRVNYVIVKNSIWNGDSI.

Cysteine 176 functions as the Thioimidate intermediate in the catalytic mechanism. 205–228 provides a ligand contact to NADP(+); the sequence is IIADGGIRTHGDIAKSIRFGATMV.

It belongs to the IMPDH/GMPR family. GuaC type 2 subfamily.

It catalyses the reaction IMP + NH4(+) + NADP(+) = GMP + NADPH + 2 H(+). Functionally, catalyzes the irreversible NADPH-dependent deamination of GMP to IMP. It functions in the conversion of nucleobase, nucleoside and nucleotide derivatives of G to A nucleotides, and in maintaining the intracellular balance of A and G nucleotides. This chain is GMP reductase, found in Streptococcus equi subsp. zooepidemicus (strain H70).